The chain runs to 127 residues: Small ribosomal subunit protein bS6 (127 aa).

The protein belongs to the bacterial ribosomal protein bS6 family.

Functionally, binds together with bS18 to 16S ribosomal RNA. The sequence is that of Small ribosomal subunit protein bS6 from Buchnera aphidicola subsp. Cinara cedri (strain Cc).